A 248-amino-acid polypeptide reads, in one-letter code: UDP-2,3-diacylglucosamine hydrolase (248 aa).

Residues aspartate 7, histidine 9, aspartate 40, asparagine 78, and histidine 113 each contribute to the Mn(2+) site. 78–79 (NR) contacts substrate. Substrate is bound by residues aspartate 121, serine 159, threonine 163, lysine 166, and histidine 194. 2 residues coordinate Mn(2+): histidine 194 and histidine 196.

Belongs to the LpxH family. Requires Mn(2+) as cofactor.

The protein localises to the cell inner membrane. The catalysed reaction is UDP-2-N,3-O-bis[(3R)-3-hydroxytetradecanoyl]-alpha-D-glucosamine + H2O = 2-N,3-O-bis[(3R)-3-hydroxytetradecanoyl]-alpha-D-glucosaminyl 1-phosphate + UMP + 2 H(+). The protein operates within glycolipid biosynthesis; lipid IV(A) biosynthesis; lipid IV(A) from (3R)-3-hydroxytetradecanoyl-[acyl-carrier-protein] and UDP-N-acetyl-alpha-D-glucosamine: step 4/6. In terms of biological role, hydrolyzes the pyrophosphate bond of UDP-2,3-diacylglucosamine to yield 2,3-diacylglucosamine 1-phosphate (lipid X) and UMP by catalyzing the attack of water at the alpha-P atom. Involved in the biosynthesis of lipid A, a phosphorylated glycolipid that anchors the lipopolysaccharide to the outer membrane of the cell. This is UDP-2,3-diacylglucosamine hydrolase from Pseudomonas savastanoi pv. phaseolicola (strain 1448A / Race 6) (Pseudomonas syringae pv. phaseolicola (strain 1448A / Race 6)).